The following is a 682-amino-acid chain: Potassium-transporting ATPase ATP-binding subunit (682 aa).

The next 4 helical transmembrane spans lie at 34–54 (PVMF…LAMV), 58–78 (IAGS…TVLF), 219–239 (IALT…TATL), and 254–274 (VLVA…LSAI). Asp-307 (4-aspartylphosphate intermediate) is an active-site residue. Residues Asp-344, Glu-348, 377 to 384 (FTAQSRMS), and Lys-395 contribute to the ATP site. The Mg(2+) site is built by Asp-518 and Asp-522. 3 helical membrane passes run 588–608 (FAII…LNVM), 616–636 (AILS…PLAL), and 662–682 (LVVP…LGLA).

This sequence belongs to the cation transport ATPase (P-type) (TC 3.A.3) family. Type IA subfamily. As to quaternary structure, the system is composed of three essential subunits: KdpA, KdpB and KdpC.

The protein localises to the cell inner membrane. It carries out the reaction K(+)(out) + ATP + H2O = K(+)(in) + ADP + phosphate + H(+). Part of the high-affinity ATP-driven potassium transport (or Kdp) system, which catalyzes the hydrolysis of ATP coupled with the electrogenic transport of potassium into the cytoplasm. This subunit is responsible for energy coupling to the transport system and for the release of the potassium ions to the cytoplasm. This Salmonella agona (strain SL483) protein is Potassium-transporting ATPase ATP-binding subunit.